The primary structure comprises 489 residues: 3-octaprenyl-4-hydroxybenzoate carboxy-lyase (489 aa).

Asn-172 lines the Mn(2+) pocket. Residues 175–177, 189–191, and 194–195 contribute to the prenylated FMN site; these read IYR, RWL, and RG. A Mn(2+)-binding site is contributed by Glu-238. Catalysis depends on Asp-287, which acts as the Proton donor.

The protein belongs to the UbiD family. In terms of assembly, homohexamer. The cofactor is prenylated FMN. It depends on Mn(2+) as a cofactor.

It localises to the cell membrane. The catalysed reaction is a 4-hydroxy-3-(all-trans-polyprenyl)benzoate + H(+) = a 2-(all-trans-polyprenyl)phenol + CO2. The protein operates within cofactor biosynthesis; ubiquinone biosynthesis. Functionally, catalyzes the decarboxylation of 3-octaprenyl-4-hydroxy benzoate to 2-octaprenylphenol, an intermediate step in ubiquinone biosynthesis. In Glaesserella parasuis serovar 5 (strain SH0165) (Haemophilus parasuis), this protein is 3-octaprenyl-4-hydroxybenzoate carboxy-lyase.